A 203-amino-acid polypeptide reads, in one-letter code: Guanylate kinase (203 aa).

In terms of domain architecture, Guanylate kinase-like spans 3–181 (GTLYIVAAPS…AVSEMCAIFT (179 aa)). 10–17 (APSGAGKS) provides a ligand contact to ATP.

This sequence belongs to the guanylate kinase family.

It localises to the cytoplasm. The catalysed reaction is GMP + ATP = GDP + ADP. In terms of biological role, essential for recycling GMP and indirectly, cGMP. This is Guanylate kinase from Xanthomonas oryzae pv. oryzae (strain MAFF 311018).